A 154-amino-acid chain; its full sequence is MKEAPVIKLRELLNLLPHRYPFLLVDKVLSYDLEKRSIVAQKNVTINEPFFVGHFPEVPIMPGVLILESLAQAAGVLLGLVLENDRNKRLALFLGIQKAKFRQAVRPGDILTLSAEFSLISSKGGKASARACVGSQVAAEGELSFALVDKQSLD.

The active site involves histidine 54.

It belongs to the thioester dehydratase family. FabZ subfamily.

The protein localises to the cytoplasm. It carries out the reaction a (3R)-hydroxyacyl-[ACP] = a (2E)-enoyl-[ACP] + H2O. In terms of biological role, involved in unsaturated fatty acids biosynthesis. Catalyzes the dehydration of short chain beta-hydroxyacyl-ACPs and long chain saturated and unsaturated beta-hydroxyacyl-ACPs. In Chlamydia caviae (strain ATCC VR-813 / DSM 19441 / 03DC25 / GPIC) (Chlamydophila caviae), this protein is 3-hydroxyacyl-[acyl-carrier-protein] dehydratase FabZ.